A 390-amino-acid polypeptide reads, in one-letter code: 1-deoxy-D-xylulose 5-phosphate reductoisomerase (390 aa).

Residues Thr10, Gly11, Ser12, Val13, Gly38, Asn40, and Asn123 each coordinate NADPH. Lys124 provides a ligand contact to 1-deoxy-D-xylulose 5-phosphate. Glu125 is an NADPH binding site. Residue Asp149 coordinates Mn(2+). Residues Ser150, Glu151, Ser175, and His198 each coordinate 1-deoxy-D-xylulose 5-phosphate. Glu151 is a binding site for Mn(2+). An NADPH-binding site is contributed by Gly204. 1-deoxy-D-xylulose 5-phosphate contacts are provided by Ser211, Asn216, Lys217, and Glu220. Glu220 provides a ligand contact to Mn(2+).

This sequence belongs to the DXR family. Requires Mg(2+) as cofactor. Mn(2+) is required as a cofactor.

It carries out the reaction 2-C-methyl-D-erythritol 4-phosphate + NADP(+) = 1-deoxy-D-xylulose 5-phosphate + NADPH + H(+). It participates in isoprenoid biosynthesis; isopentenyl diphosphate biosynthesis via DXP pathway; isopentenyl diphosphate from 1-deoxy-D-xylulose 5-phosphate: step 1/6. Catalyzes the NADPH-dependent rearrangement and reduction of 1-deoxy-D-xylulose-5-phosphate (DXP) to 2-C-methyl-D-erythritol 4-phosphate (MEP). This chain is 1-deoxy-D-xylulose 5-phosphate reductoisomerase, found in Paracoccus denitrificans (strain Pd 1222).